A 1355-amino-acid chain; its full sequence is Transcription factor MAR1 (1355 aa).

The zn(2)-C6 fungal-type DNA-binding region spans 23–52 (CTICRKRKVKCDKTRPHCNQCTKTGVAHLC). Disordered regions lie at residues 586–614 (TTDN…KDTN), 918–942 (SVPS…LNQD), and 1221–1253 (PPIS…TSSL). The segment covering 589-603 (NTRSGPPSNSNRNGS) has biased composition (low complexity). Over residues 604–614 (ETPSVSPKDTN) the composition is skewed to polar residues. A compositionally biased stretch (low complexity) spans 918-927 (SVPSSCNSSS). Positions 1225 to 1238 (SAKNNMAWGTTPES) are enriched in polar residues.

It is found in the nucleus. Functionally, transcription factor that contributes to plasma membrane sphingolipid incorporation and membrane permeability, decreasing fluconazole accumulation. Regulates 337 genes under fluconazole stress, including several related to lipid biosynthesis pathways such as RSB1, encoding a sphingoid long-chain base efflux transporter. Associates with the promoter of RSB1 in the region containing two 5'-CCCCTCC-3' motifs and increases its promoter occupancy upon fluconazole stress. The polypeptide is Transcription factor MAR1 (Candida glabrata (strain ATCC 2001 / BCRC 20586 / JCM 3761 / NBRC 0622 / NRRL Y-65 / CBS 138) (Yeast)).